The following is a 524-amino-acid chain: Bifunctional purine biosynthesis protein PurH (524 aa).

Residues 1 to 145 (MIKQALLSVS…KNHRDVTVIV (145 aa)) form the MGS-like domain.

It belongs to the PurH family.

It carries out the reaction (6R)-10-formyltetrahydrofolate + 5-amino-1-(5-phospho-beta-D-ribosyl)imidazole-4-carboxamide = 5-formamido-1-(5-phospho-D-ribosyl)imidazole-4-carboxamide + (6S)-5,6,7,8-tetrahydrofolate. It catalyses the reaction IMP + H2O = 5-formamido-1-(5-phospho-D-ribosyl)imidazole-4-carboxamide. Its pathway is purine metabolism; IMP biosynthesis via de novo pathway; 5-formamido-1-(5-phospho-D-ribosyl)imidazole-4-carboxamide from 5-amino-1-(5-phospho-D-ribosyl)imidazole-4-carboxamide (10-formyl THF route): step 1/1. The protein operates within purine metabolism; IMP biosynthesis via de novo pathway; IMP from 5-formamido-1-(5-phospho-D-ribosyl)imidazole-4-carboxamide: step 1/1. This is Bifunctional purine biosynthesis protein PurH from Cupriavidus necator (strain ATCC 17699 / DSM 428 / KCTC 22496 / NCIMB 10442 / H16 / Stanier 337) (Ralstonia eutropha).